Reading from the N-terminus, the 371-residue chain is MYNETPIKRRPSTRIYVGNVPIGDGAPIAVQSMTNTKTTDVEATIAQIRALEKVGADIVRVSVPTMDAAEAFKIIKQSVNVPLVADIHFDYRIALKVAEYGVDCLRINPGNIGNEERIRSVVECARDKNIPIRIGVNGGSLEKDLMDKYKEPTPEALLESAMRHVDILDRMNFDQFKVSVKASDVFLAVESYRLLAKQIRQPLHLGITEAGGARAGSVKSAVGLGMLLAEGIGDTLRISLAADPVEEIKVGFDILKSLRIRSRGINFIACPSCSRQEFDVISTVNELERRLEDVTTAMDVSIIGCVVNGPGEALVSHIGLTGGHNKSGYYDEGERQKERFDNDNLVDSLEAKIRAKASQLANRIQVKDTTE.

Positions 270, 273, 305, and 312 each coordinate [4Fe-4S] cluster.

It belongs to the IspG family. Requires [4Fe-4S] cluster as cofactor.

It catalyses the reaction (2E)-4-hydroxy-3-methylbut-2-enyl diphosphate + oxidized [flavodoxin] + H2O + 2 H(+) = 2-C-methyl-D-erythritol 2,4-cyclic diphosphate + reduced [flavodoxin]. It participates in isoprenoid biosynthesis; isopentenyl diphosphate biosynthesis via DXP pathway; isopentenyl diphosphate from 1-deoxy-D-xylulose 5-phosphate: step 5/6. Converts 2C-methyl-D-erythritol 2,4-cyclodiphosphate (ME-2,4cPP) into 1-hydroxy-2-methyl-2-(E)-butenyl 4-diphosphate. This Shewanella sp. (strain W3-18-1) protein is 4-hydroxy-3-methylbut-2-en-1-yl diphosphate synthase (flavodoxin).